Here is a 99-residue protein sequence, read N- to C-terminus: UPF0235 protein HS_1657 (99 aa).

This sequence belongs to the UPF0235 family.

In Histophilus somni (strain 129Pt) (Haemophilus somnus), this protein is UPF0235 protein HS_1657.